The primary structure comprises 574 residues: Phosphatidylinositol 4-kinase gamma 3 (574 aa).

Ubiquitin-like domains lie at 32 to 109 (PILV…SDLQ) and 110 to 188 (AISV…AKVR). In terms of domain architecture, PI3K/PI4K catalytic spans 257–555 (GNGPIRSSDG…IVPTETTEDE (299 aa)). The G-loop stretch occupies residues 263–269 (SSDGSGG). ATP is bound by residues 264-270 (SDGSGGA), K286, and 381-384 (QMFV). The segment at 414–422 (ANADRHAGN) is catalytic loop. Positions 438–464 (PIDHGYCFPNKFEDCTFEWLYWPQAKE) are activation loop. D440 is a binding site for ATP.

This sequence belongs to the PI3/PI4-kinase family. Type II PI4K subfamily.

The enzyme catalyses a 1,2-diacyl-sn-glycero-3-phospho-(1D-myo-inositol) + ATP = a 1,2-diacyl-sn-glycero-3-phospho-(1D-myo-inositol 4-phosphate) + ADP + H(+). Its function is as follows. The phosphorylation of phosphatidylinositol (PI) to PI4P is the first committed step in the generation of phosphatidylinositol 4,5-bisphosphate (PIP2), a precursor of the second messenger inositol 1,4,5-trisphosphate (InsP3). The chain is Phosphatidylinositol 4-kinase gamma 3 (PI4KG3) from Arabidopsis thaliana (Mouse-ear cress).